The sequence spans 1087 residues: Synaptopodin-2 (1087 aa).

The PDZ domain occupies F6 to S88. 3 disordered regions span residues G24 to E52, S88 to P112, and G207 to P272. Residues T101–P112 are compositionally biased toward basic and acidic residues. Composition is skewed to polar residues over residues G207–E230 and T246–G255. 3 positions are modified to phosphoserine: S300, S319, and S320. The disordered stretch occupies residues S320–V359. The segment covering G322–R337 has biased composition (basic and acidic residues). T323 is subject to Phosphothreonine. Positions P338–L348 are enriched in basic residues. Basic and acidic residues predominate over residues R349–V359. A Nuclear localization signal motif is present at residues K388–K396. Residues S540, S541, S543, and S546 each carry the phosphoserine modification. The interval R551–P557 is interaction with YWHAB. S555 bears the Phosphoserine; by PKA mark. Disordered regions lie at residues A581–L817 and N832–G863. Residue S596 is modified to Phosphoserine. The interaction with YWHAB stretch occupies residues R599 to P804. Residue T602 is modified to Phosphothreonine; by PKA and CaMK2. S603 carries the phosphoserine modification. Composition is skewed to pro residues over residues P609–E622 and A636–W647. Residues P611–Y614 carry the PPPY motif motif. Residue Y614 is modified to Phosphotyrosine. S618 carries the post-translational modification Phosphoserine. Residues S656–V796 form an F-actin binding region. The tract at residues S656–N909 is F-actin bundling activity. Interaction with ACTN2 stretches follow at residues S656 to A917 and Q894 to E1087. 2 positions are modified to phosphoserine: S697 and S719. Positions A740–A893 are actin binding. The residue at position 744 (T744) is a Phosphothreonine. A compositionally biased stretch (low complexity) spans K751 to A777. Residues S767 and S771 each carry the phosphoserine modification. A compositionally biased stretch (polar residues) spans A781 to S797. An interaction with FLNC region spans residues Q803 to E1087. A phosphoserine mark is found at S895, S899, and S903. Disordered regions lie at residues A930–L952, F970–A1012, and P1037–Y1060. The tract at residues P993–A1012 is interaction with ZYX. 2 positions are modified to phosphoserine: S1008 and S1050. The span at P1037–P1051 shows a compositional bias: low complexity.

It belongs to the synaptopodin family. As to quaternary structure, may self-associate in muscle cells under oxidative stress. Binds F-actin. Interacts with ACTN2; ACTN2 is proposed to anchor SYOP2 at Z lines in mature myocytes. Interacts with AKAP6, PPP3CA and CAMK2A. Interacts (phosphorylated form) with YWHAB; YWHAB competes with ACTN2 for interaction with SYNPO2. Interacts with KPNA2; mediating nuclear import of SYNOP2; dependent on interaction with YWHAB. Interacts with IPO13; may be implicated in SYNOP2 nuclear import. Interacts with ZYX, FLNC, ILK. Interacts with BAG3 (via WW 1 domain). May associate with the CASA complex consisting of HSPA8, HSPB8 and BAG3. Interacts with VPS18. In terms of processing, phosphorylated by PKA, and by CaMK2 at multiple sites. Dephosphorylated by calcineurin at Ser-555 and Thr-602; abrogating interaction with YWHAB and impairing nuclear import. Expressed in skeletal muscle, heart, colon, stomach, uterus and lung. Expression is restricted to muscle cell layers in colon, uterus and stomach.

Its subcellular location is the nucleus. It localises to the cytoplasm. The protein resides in the myofibril. It is found in the sarcomere. The protein localises to the z line. Its subcellular location is the cell junction. It localises to the focal adhesion. Functionally, has an actin-binding and actin-bundling activity. Can induce the formation of F-actin networks. At the sarcomeric Z lines is proposed to act as adapter protein that links nascent myofibers to the sarcolemma via ZYX and may play a role in early assembly and stabilization of the Z lines. Involved in autophagosome formation. May play a role in chaperone-assisted selective autophagy (CASA) involved in Z lines maintenance in striated muscle under mechanical tension; may link the client-processing CASA chaperone machinery to a membrane-tethering and fusion complex providing autophagosome membranes. Involved in regulation of cell migration. May be a tumor suppressor. The protein is Synaptopodin-2 (Synpo2) of Mus musculus (Mouse).